The sequence spans 433 residues: Mannan endo-1,4-beta-mannosidase 2 (433 aa).

A signal peptide spans 1–28 (MAAPTGNGPVIPILGFLTCVAFIYLSFG). The N-linked (GlcNAc...) asparagine glycan is linked to asparagine 46. Substrate is bound at residue tryptophan 98. Asparagine 169 is a glycosylation site (N-linked (GlcNAc...) asparagine). Asparagine 214 lines the substrate pocket. The active-site Proton donor is the glutamate 215. Position 295 (tyrosine 295) interacts with substrate. The active-site Nucleophile is the glutamate 335. Position 377 (tryptophan 377) interacts with substrate.

It belongs to the glycosyl hydrolase 5 (cellulase A) family. In terms of tissue distribution, expressed in roots, stems, leaves and seeds.

It localises to the secreted. It carries out the reaction Random hydrolysis of (1-&gt;4)-beta-D-mannosidic linkages in mannans, galactomannans and glucomannans.. This chain is Mannan endo-1,4-beta-mannosidase 2 (MAN2), found in Arabidopsis thaliana (Mouse-ear cress).